A 125-amino-acid polypeptide reads, in one-letter code: Ribonuclease P protein component (125 aa).

It belongs to the RnpA family. As to quaternary structure, consists of a catalytic RNA component (M1 or rnpB) and a protein subunit.

It catalyses the reaction Endonucleolytic cleavage of RNA, removing 5'-extranucleotides from tRNA precursor.. In terms of biological role, RNaseP catalyzes the removal of the 5'-leader sequence from pre-tRNA to produce the mature 5'-terminus. It can also cleave other RNA substrates such as 4.5S RNA. The protein component plays an auxiliary but essential role in vivo by binding to the 5'-leader sequence and broadening the substrate specificity of the ribozyme. In Clostridium botulinum (strain Alaska E43 / Type E3), this protein is Ribonuclease P protein component.